The sequence spans 114 residues: T cell receptor beta variable 6-5 (114 aa).

The N-terminal stretch at 1–21 is a signal peptide; the sequence is MSIGLLCCAALSLLWAGPVNA. Residues 22-114 form the Ig-like domain; the sequence is GVTQTPKFQV…TSVYFCASSY (93 aa). A disulfide bridge links cysteine 42 with cysteine 110. Asparagine 84 carries an N-linked (GlcNAc...) asparagine glycan.

Alpha-beta TR is a heterodimer composed of an alpha and beta chain; disulfide-linked. The alpha-beta TR is associated with the transmembrane signaling CD3 coreceptor proteins to form the TR-CD3 (TcR or TCR). The assembly of alpha-beta TR heterodimers with CD3 occurs in the endoplasmic reticulum where a single alpha-beta TR heterodimer associates with one CD3D-CD3E heterodimer, one CD3G-CD3E heterodimer and one CD247 homodimer forming a stable octameric structure. CD3D-CD3E and CD3G-CD3E heterodimers preferentially associate with TR alpha and TR beta chains, respectively. The association of the CD247 homodimer is the last step of TcR assembly in the endoplasmic reticulum and is required for transport to the cell surface.

Its subcellular location is the cell membrane. Functionally, v region of the variable domain of T cell receptor (TR) beta chain that participates in the antigen recognition. Alpha-beta T cell receptors are antigen specific receptors which are essential to the immune response and are present on the cell surface of T lymphocytes. Recognize peptide-major histocompatibility (MH) (pMH) complexes that are displayed by antigen presenting cells (APC), a prerequisite for efficient T cell adaptive immunity against pathogens. Binding of alpha-beta TR to pMH complex initiates TR-CD3 clustering on the cell surface and intracellular activation of LCK that phosphorylates the ITAM motifs of CD3G, CD3D, CD3E and CD247 enabling the recruitment of ZAP70. In turn ZAP70 phosphorylates LAT, which recruits numerous signaling molecules to form the LAT signalosome. The LAT signalosome propagates signal branching to three major signaling pathways, the calcium, the mitogen-activated protein kinase (MAPK) kinase and the nuclear factor NF-kappa-B (NF-kB) pathways, leading to the mobilization of transcription factors that are critical for gene expression and essential for T cell growth and differentiation. The T cell repertoire is generated in the thymus, by V-(D)-J rearrangement. This repertoire is then shaped by intrathymic selection events to generate a peripheral T cell pool of self-MH restricted, non-autoaggressive T cells. Post-thymic interaction of alpha-beta TR with the pMH complexes shapes TR structural and functional avidity. This Homo sapiens (Human) protein is T cell receptor beta variable 6-5.